A 161-amino-acid chain; its full sequence is Phosphopantetheine adenylyltransferase (161 aa).

Substrate is bound at residue Thr-10. Residues 10–11 (TF) and His-18 contribute to the ATP site. Substrate contacts are provided by Lys-42, Leu-74, and Arg-88. ATP-binding positions include 89–91 (GIR), Glu-99, and 124–130 (WRYLSST).

It belongs to the bacterial CoaD family. As to quaternary structure, homohexamer. Mg(2+) is required as a cofactor.

Its subcellular location is the cytoplasm. It carries out the reaction (R)-4'-phosphopantetheine + ATP + H(+) = 3'-dephospho-CoA + diphosphate. Its pathway is cofactor biosynthesis; coenzyme A biosynthesis; CoA from (R)-pantothenate: step 4/5. Its function is as follows. Reversibly transfers an adenylyl group from ATP to 4'-phosphopantetheine, yielding dephospho-CoA (dPCoA) and pyrophosphate. The protein is Phosphopantetheine adenylyltransferase of Haemophilus ducreyi (strain 35000HP / ATCC 700724).